We begin with the raw amino-acid sequence, 110 residues long: Large ribosomal subunit protein uL22 (110 aa).

The protein belongs to the universal ribosomal protein uL22 family. As to quaternary structure, part of the 50S ribosomal subunit.

Functionally, this protein binds specifically to 23S rRNA; its binding is stimulated by other ribosomal proteins, e.g. L4, L17, and L20. It is important during the early stages of 50S assembly. It makes multiple contacts with different domains of the 23S rRNA in the assembled 50S subunit and ribosome. Its function is as follows. The globular domain of the protein is located near the polypeptide exit tunnel on the outside of the subunit, while an extended beta-hairpin is found that lines the wall of the exit tunnel in the center of the 70S ribosome. The sequence is that of Large ribosomal subunit protein uL22 from Baumannia cicadellinicola subsp. Homalodisca coagulata.